The sequence spans 267 residues: 4-hydroxy-tetrahydrodipicolinate reductase (267 aa).

Residues 8 to 13 (GAAGRM) and Glu-34 each bind NAD(+). Arg-35 is a binding site for NADP(+). NAD(+) is bound by residues 98–100 (GST) and 122–125 (APNM). Residue His-155 is the Proton donor/acceptor of the active site. His-156 contributes to the (S)-2,3,4,5-tetrahydrodipicolinate binding site. Lys-159 serves as the catalytic Proton donor. A (S)-2,3,4,5-tetrahydrodipicolinate-binding site is contributed by 165–166 (GT).

It belongs to the DapB family.

It is found in the cytoplasm. The catalysed reaction is (S)-2,3,4,5-tetrahydrodipicolinate + NAD(+) + H2O = (2S,4S)-4-hydroxy-2,3,4,5-tetrahydrodipicolinate + NADH + H(+). The enzyme catalyses (S)-2,3,4,5-tetrahydrodipicolinate + NADP(+) + H2O = (2S,4S)-4-hydroxy-2,3,4,5-tetrahydrodipicolinate + NADPH + H(+). The protein operates within amino-acid biosynthesis; L-lysine biosynthesis via DAP pathway; (S)-tetrahydrodipicolinate from L-aspartate: step 4/4. Catalyzes the conversion of 4-hydroxy-tetrahydrodipicolinate (HTPA) to tetrahydrodipicolinate. The polypeptide is 4-hydroxy-tetrahydrodipicolinate reductase (Geotalea uraniireducens (strain Rf4) (Geobacter uraniireducens)).